The following is a 230-amino-acid chain: Urease accessory protein UreF (230 aa).

The protein belongs to the UreF family. In terms of assembly, ureD, UreF and UreG form a complex that acts as a GTP-hydrolysis-dependent molecular chaperone, activating the urease apoprotein by helping to assemble the nickel containing metallocenter of UreC. The UreE protein probably delivers the nickel.

It is found in the cytoplasm. Functionally, required for maturation of urease via the functional incorporation of the urease nickel metallocenter. This chain is Urease accessory protein UreF, found in Cupriavidus metallidurans (strain ATCC 43123 / DSM 2839 / NBRC 102507 / CH34) (Ralstonia metallidurans).